The following is a 448-amino-acid chain: Glutamyl-tRNA reductase (448 aa).

Residues 49 to 52 (TCNR), Ser-109, 114 to 116 (ETQ), and Gln-120 each bind substrate. Catalysis depends on Cys-50, which acts as the Nucleophile. NADP(+) is bound at residue 189-194 (GAGETG). A disordered region spans residues 427 to 448 (PVDEVEETDATSAKAPLRALMR).

The protein belongs to the glutamyl-tRNA reductase family. In terms of assembly, homodimer.

It carries out the reaction (S)-4-amino-5-oxopentanoate + tRNA(Glu) + NADP(+) = L-glutamyl-tRNA(Glu) + NADPH + H(+). Its pathway is porphyrin-containing compound metabolism; protoporphyrin-IX biosynthesis; 5-aminolevulinate from L-glutamyl-tRNA(Glu): step 1/2. Catalyzes the NADPH-dependent reduction of glutamyl-tRNA(Glu) to glutamate 1-semialdehyde (GSA). The protein is Glutamyl-tRNA reductase of Exiguobacterium sp. (strain ATCC BAA-1283 / AT1b).